Reading from the N-terminus, the 405-residue chain is 4-hydroxy-3-methylbut-2-en-1-yl diphosphate synthase (flavodoxin) (405 aa).

Positions 297, 300, 343, and 350 each coordinate [4Fe-4S] cluster.

This sequence belongs to the IspG family. It depends on [4Fe-4S] cluster as a cofactor.

The enzyme catalyses (2E)-4-hydroxy-3-methylbut-2-enyl diphosphate + oxidized [flavodoxin] + H2O + 2 H(+) = 2-C-methyl-D-erythritol 2,4-cyclic diphosphate + reduced [flavodoxin]. It functions in the pathway isoprenoid biosynthesis; isopentenyl diphosphate biosynthesis via DXP pathway; isopentenyl diphosphate from 1-deoxy-D-xylulose 5-phosphate: step 5/6. Converts 2C-methyl-D-erythritol 2,4-cyclodiphosphate (ME-2,4cPP) into 1-hydroxy-2-methyl-2-(E)-butenyl 4-diphosphate. This chain is 4-hydroxy-3-methylbut-2-en-1-yl diphosphate synthase (flavodoxin), found in Francisella tularensis subsp. tularensis (strain FSC 198).